The following is a 400-amino-acid chain: NAD-dependent protein deacetylase sirtuin-7 (400 aa).

The tract at residues 1–28 (MAAGGLSRSERKAAERVRRLREEQQRER) is disordered. Positions 8–28 (RSERKAAERVRRLREEQQRER) are enriched in basic and acidic residues. Residues 82–329 (PEELQRKVRE…QLLMDELGLE (248 aa)) form the Deacetylase sirtuin-type domain. NAD(+)-binding positions include 107–126 (GAGI…NGVW) and 167–170 (QNCD). His-187 functions as the Proton acceptor in the catalytic mechanism. The Zn(2+) site is built by Cys-195, Cys-198, Cys-225, and Cys-228. NAD(+)-binding positions include 268–270 (GSS), 297–299 (NLQ), and Cys-315. Residues 354–380 (SHSRKSLCRSREEPGPGDRGAPLSSAP) form a disordered region. Arg-388 carries the post-translational modification Asymmetric dimethylarginine; alternate. Arg-388 carries the post-translational modification Omega-N-methylarginine; alternate.

It belongs to the sirtuin family. Class IV subfamily. In terms of assembly, interacts with UBTF and the RNA polymerase I complex. Interacts with components of the B-WICH complex, such as MYBBP1A, SMARCA5/SNF2H and BAZ1B/WSTF. Interacts with ELK4, leading to stabilization at target promoters for H3K18Ac deacetylation. Interacts with histone H2A and/or histone H2B. Interacts with DNMT1. Interacts with SIRT1. The cofactor is Zn(2+). In terms of processing, phosphorylated during mitosis. Methylation at Arg-388 by PRMT6 inhibits the H3K18Ac histone deacetylase activity, promoting mitochondria biogenesis and maintaining mitochondria respiration. Post-translationally, ubiquitinated via 'Lys-63'-linked ubiquitin chains. Deubiquitinated by USP7, inhibiting the H3K18Ac histone deacetylase activity and regulating gluconeogenesis. Ubiquitinated by E3 ubiquitin-protein ligase complex containing FBXO7; leading to proteasomal degradation.

The protein resides in the nucleus. The protein localises to the nucleolus. It localises to the nucleoplasm. It is found in the chromosome. Its subcellular location is the cytoplasm. It carries out the reaction N(6)-acetyl-L-lysyl-[protein] + NAD(+) + H2O = 2''-O-acetyl-ADP-D-ribose + nicotinamide + L-lysyl-[protein]. It catalyses the reaction N(6)-glutaryl-L-lysyl-[protein] + NAD(+) + H2O = 2''-O-glutaryl-ADP-D-ribose + nicotinamide + L-lysyl-[protein]. The catalysed reaction is N(6)-succinyl-L-lysyl-[protein] + NAD(+) + H2O = 2''-O-succinyl-ADP-D-ribose + nicotinamide + L-lysyl-[protein]. The enzyme catalyses N(6)-propanoyl-L-lysyl-[protein] + NAD(+) + H2O = 3''-O-propanoyl-ADP-D-ribose + nicotinamide + L-lysyl-[protein]. It carries out the reaction N(6)-decanoyl-L-lysyl-[protein] + NAD(+) + H2O = 2''-O-decanoyl-ADP-D-ribose + nicotinamide + L-lysyl-[protein]. With respect to regulation, NAD-dependent protein-lysine deacetylase and deacylase activities are activated by nucleic acids. Histone deacetylase activity is activated by DNA. Protein-lysine deacylase activity is activated by RNA. H3K18Ac histone deacetylase activity is inhibited by methylation at Arg-388. H3K18Ac histone deacetylase activity is inhibited by deubiquitination by USP7. In terms of biological role, NAD-dependent protein-lysine deacylase that can act both as a deacetylase or deacylase (desuccinylase, depropionylase, deglutarylase and dedecanoylase), depending on the context. Specifically mediates deacetylation of histone H3 at 'Lys-18' (H3K18Ac). In contrast to other histone deacetylases, displays strong preference for a specific histone mark, H3K18Ac, directly linked to control of gene expression. H3K18Ac is mainly present around the transcription start site of genes and has been linked to activation of nuclear hormone receptors; SIRT7 thereby acts as a transcription repressor. Moreover, H3K18 hypoacetylation has been reported as a marker of malignancy in various cancers and seems to maintain the transformed phenotype of cancer cells. Also able to mediate deacetylation of histone H3 at 'Lys-36' (H3K36Ac) in the context of nucleosomes. Also mediates deacetylation of non-histone proteins, such as ATM, CDK9, DDX21, DDB1, FBL, FKBP5/FKBP51, GABPB1, RAN, RRP9/U3-55K and POLR1E/PAF53. Enriched in nucleolus where it stimulates transcription activity of the RNA polymerase I complex. Acts by mediating the deacetylation of the RNA polymerase I subunit POLR1E/PAF53, thereby promoting the association of RNA polymerase I with the rDNA promoter region and coding region. In response to metabolic stress, SIRT7 is released from nucleoli leading to hyperacetylation of POLR1E/PAF53 and decreased RNA polymerase I transcription. Required to restore the transcription of ribosomal RNA (rRNA) at the exit from mitosis. Promotes pre-ribosomal RNA (pre-rRNA) cleavage at the 5'-terminal processing site by mediating deacetylation of RRP9/U3-55K, a core subunit of the U3 snoRNP complex. Mediates 'Lys-37' deacetylation of Ran, thereby regulating the nuclear export of NF-kappa-B subunit RELA/p65. Acts as a regulator of DNA damage repair by mediating deacetylation of ATM during the late stages of DNA damage response, promoting ATM dephosphorylation and deactivation. Suppresses the activity of the DCX (DDB1-CUL4-X-box) E3 ubiquitin-protein ligase complexes by mediating deacetylation of DDB1, which prevents the interaction between DDB1 and CUL4 (CUL4A or CUL4B). Activates RNA polymerase II transcription by mediating deacetylation of CDK9, thereby promoting 'Ser-2' phosphorylation of the C-terminal domain (CTD) of RNA polymerase II. Deacetylates FBL, promoting histone-glutamine methyltransferase activity of FBL. Acts as a regulator of mitochondrial function by catalyzing deacetylation of GABPB1. Regulates Akt/AKT1 activity by mediating deacetylation of FKBP5/FKBP51. Required to prevent R-loop-associated DNA damage and transcription-associated genomic instability by mediating deacetylation and subsequent activation of DDX21, thereby overcoming R-loop-mediated stalling of RNA polymerases. In addition to protein deacetylase activity, also acts as a protein-lysine deacylase. Acts as a protein depropionylase by mediating depropionylation of Osterix (SP7), thereby regulating bone formation by osteoblasts. Acts as a histone deglutarylase by mediating deglutarylation of histone H4 on 'Lys-91' (H4K91glu); a mark that destabilizes nucleosomes by promoting dissociation of the H2A-H2B dimers from nucleosomes. Acts as a histone desuccinylase: in response to DNA damage, recruited to DNA double-strand breaks (DSBs) and catalyzes desuccinylation of histone H3 on 'Lys-122' (H3K122succ), thereby promoting chromatin condensation and DSB repair. Also promotes DSB repair by promoting H3K18Ac deacetylation, regulating non-homologous end joining (NHEJ). Along with its role in DNA repair, required for chromosome synapsis during prophase I of female meiosis by catalyzing H3K18Ac deacetylation. Involved in transcriptional repression of LINE-1 retrotransposon via H3K18Ac deacetylation, and promotes their association with the nuclear lamina. Required to stabilize ribosomal DNA (rDNA) heterochromatin and prevent cellular senescence induced by rDNA instability. Acts as a negative regulator of SIRT1 by preventing autodeacetylation of SIRT1, restricting SIRT1 deacetylase activity. This Bos taurus (Bovine) protein is NAD-dependent protein deacetylase sirtuin-7 (SIRT7).